The primary structure comprises 208 residues: Imidazole glycerol phosphate synthase subunit HisH (208 aa).

A Glutamine amidotransferase type-1 domain is found at methionine 1 to serine 206. Cysteine 79 acts as the Nucleophile in catalysis. Active-site residues include histidine 181 and glutamate 183.

Heterodimer of HisH and HisF.

It localises to the cytoplasm. It catalyses the reaction 5-[(5-phospho-1-deoxy-D-ribulos-1-ylimino)methylamino]-1-(5-phospho-beta-D-ribosyl)imidazole-4-carboxamide + L-glutamine = D-erythro-1-(imidazol-4-yl)glycerol 3-phosphate + 5-amino-1-(5-phospho-beta-D-ribosyl)imidazole-4-carboxamide + L-glutamate + H(+). It carries out the reaction L-glutamine + H2O = L-glutamate + NH4(+). It functions in the pathway amino-acid biosynthesis; L-histidine biosynthesis; L-histidine from 5-phospho-alpha-D-ribose 1-diphosphate: step 5/9. Its function is as follows. IGPS catalyzes the conversion of PRFAR and glutamine to IGP, AICAR and glutamate. The HisH subunit catalyzes the hydrolysis of glutamine to glutamate and ammonia as part of the synthesis of IGP and AICAR. The resulting ammonia molecule is channeled to the active site of HisF. The sequence is that of Imidazole glycerol phosphate synthase subunit HisH from Listeria monocytogenes serotype 4a (strain HCC23).